The primary structure comprises 92 residues: YcgL domain-containing protein VC0395_A1544/VC395_2072 (92 aa).

One can recognise a YcgL domain in the interval 1–84; it reads MLCSIYKSPK…PPENLLEQHK (84 aa). Residues 71–92 form a disordered region; the sequence is QLPPPPENLLEQHKERKARQTP.

This Vibrio cholerae serotype O1 (strain ATCC 39541 / Classical Ogawa 395 / O395) protein is YcgL domain-containing protein VC0395_A1544/VC395_2072.